A 240-amino-acid polypeptide reads, in one-letter code: UDP-2,3-diacylglucosamine hydrolase (240 aa).

Residues Asp-8, His-10, Asp-41, Asn-79, and His-114 each contribute to the Mn(2+) site. 79–80 (NR) lines the substrate pocket. Substrate contacts are provided by Asp-122, Ser-160, Asn-164, Lys-167, and His-195. Residues His-195 and His-197 each contribute to the Mn(2+) site.

This sequence belongs to the LpxH family. It depends on Mn(2+) as a cofactor.

The protein localises to the cell inner membrane. It carries out the reaction UDP-2-N,3-O-bis[(3R)-3-hydroxytetradecanoyl]-alpha-D-glucosamine + H2O = 2-N,3-O-bis[(3R)-3-hydroxytetradecanoyl]-alpha-D-glucosaminyl 1-phosphate + UMP + 2 H(+). The protein operates within glycolipid biosynthesis; lipid IV(A) biosynthesis; lipid IV(A) from (3R)-3-hydroxytetradecanoyl-[acyl-carrier-protein] and UDP-N-acetyl-alpha-D-glucosamine: step 4/6. Its function is as follows. Hydrolyzes the pyrophosphate bond of UDP-2,3-diacylglucosamine to yield 2,3-diacylglucosamine 1-phosphate (lipid X) and UMP by catalyzing the attack of water at the alpha-P atom. Involved in the biosynthesis of lipid A, a phosphorylated glycolipid that anchors the lipopolysaccharide to the outer membrane of the cell. The protein is UDP-2,3-diacylglucosamine hydrolase of Escherichia coli (strain SE11).